The sequence spans 682 residues: Potassium-transporting ATPase ATP-binding subunit (682 aa).

4 consecutive transmembrane segments (helical) span residues 34-54 (PVMF…LAMV), 58-78 (IAGS…TVLF), 219-239 (IALT…TATL), and 254-274 (VLVA…LSAI). Asp307 (4-aspartylphosphate intermediate) is an active-site residue. Residues Asp344, Glu348, 377–384 (FTAQSRMS), and Lys395 contribute to the ATP site. Mg(2+)-binding residues include Asp518 and Asp522. 3 helical membrane-spanning segments follow: residues 588–608 (FAII…LNVM), 616–636 (AILS…PLAL), and 662–682 (LVVP…LGLA).

The protein belongs to the cation transport ATPase (P-type) (TC 3.A.3) family. Type IA subfamily. As to quaternary structure, the system is composed of three essential subunits: KdpA, KdpB and KdpC.

Its subcellular location is the cell inner membrane. It catalyses the reaction K(+)(out) + ATP + H2O = K(+)(in) + ADP + phosphate + H(+). In terms of biological role, part of the high-affinity ATP-driven potassium transport (or Kdp) system, which catalyzes the hydrolysis of ATP coupled with the electrogenic transport of potassium into the cytoplasm. This subunit is responsible for energy coupling to the transport system and for the release of the potassium ions to the cytoplasm. The chain is Potassium-transporting ATPase ATP-binding subunit from Salmonella newport (strain SL254).